The chain runs to 696 residues: Junctophilin-2 (696 aa).

The Cytoplasmic portion of the chain corresponds to methionine 1–threonine 674. MORN repeat units follow at residues tyrosine 14 to glycine 36, tyrosine 38 to threonine 59, phenylalanine 60 to arginine 79, tyrosine 82 to alanine 104, tyrosine 106 to threonine 128, and tyrosine 129 to methionine 151. Phosphoserine is present on residues serine 162 and serine 165. 2 disordered regions span residues serine 164–valine 192 and leucine 246–phenylalanine 273. MORN repeat units follow at residues tyrosine 285–arginine 307 and tyrosine 308–arginine 330. Positions lysine 345–lysine 359 match the Bipartite nuclear localization signal motif. The interval asparagine 439–alanine 664 is disordered. Phosphoserine is present on residues serine 440, serine 442, and serine 462. Positions glutamate 457 to proline 471 are enriched in basic and acidic residues. Threonine 470 bears the Phosphothreonine mark. The span at glutamate 474–proline 487 shows a compositional bias: pro residues. A Phosphoserine modification is found at serine 479. Threonine 483 is modified (phosphothreonine). The Nuclear localization signal signature appears at lysine 488–proline 492. A phosphoserine mark is found at serine 527 and serine 533. Residues proline 573–glutamate 585 are compositionally biased toward acidic residues. Phosphoserine is present on residues serine 593, serine 597, and serine 613. Basic and acidic residues predominate over residues alanine 631–glycine 644. Residues valine 675 to leucine 695 form a helical; Anchor for type IV membrane protein membrane-spanning segment.

Belongs to the junctophilin family. As to quaternary structure, interacts with TRPC3. Interacts with BAG5 and HSPA8; the interaction with HSPA8 is increased in the presence of BAG5. Interacts with MEF2C. Post-translationally, proteolytically cleaved by calpain in response to cardiac stress. The major cleavage site takes place at the C-terminus and leads to the release of the Junctophilin-2 N-terminal fragment chain (JP2NT). In terms of processing, phosphorylation on Ser-165, probably by PKC, affects RYR1-mediated calcium ion release, interaction with TRPC3, and skeletal muscle myotubule development. Abundantly expressed in skeletal muscle and heart. Weak expression in stomach and lung.

The protein resides in the cell membrane. Its subcellular location is the sarcoplasmic reticulum membrane. The protein localises to the endoplasmic reticulum membrane. It is found in the nucleus. Its function is as follows. Membrane-binding protein that provides a structural bridge between the plasma membrane and the sarcoplasmic reticulum and is required for normal excitation-contraction coupling in cardiomyocytes. Provides a structural foundation for functional cross-talk between the cell surface and intracellular Ca(2+) release channels by maintaining the 12-15 nm gap between the sarcolemma and the sarcoplasmic reticulum membranes in the cardiac dyads. Necessary for proper intracellular Ca(2+) signaling in cardiac myocytes via its involvement in ryanodine receptor-mediated calcium ion release. Contributes to the construction of skeletal muscle triad junctions. Transcription repressor required to safeguard against the deleterious effects of cardiac stress. Generated following cleavage of the Junctophilin-2 chain by calpain in response to cardiac stress in cardiomyocytes. Following cleavage and release from the membrane, translocates to the nucleus, binds DNA and represses expression of genes implicated in cell growth and differentiation, hypertrophy, inflammation and fibrosis. Modifies the transcription profile and thereby attenuates pathological remodeling in response to cardiac stress. Probably acts by competing with MEF2 transcription factors and TATA-binding proteins. This chain is Junctophilin-2, found in Mus musculus (Mouse).